Consider the following 408-residue polypeptide: Tyrosine--tRNA ligase (408 aa).

Residues Pro46 to His55 carry the 'HIGH' region motif. Residues Lys230–Ser234 carry the 'KMSKS' region motif. Lys233 contributes to the ATP binding site. The 62-residue stretch at Val343–Phe404 folds into the S4 RNA-binding domain.

This sequence belongs to the class-I aminoacyl-tRNA synthetase family. TyrS type 2 subfamily. In terms of assembly, homodimer.

It is found in the cytoplasm. It catalyses the reaction tRNA(Tyr) + L-tyrosine + ATP = L-tyrosyl-tRNA(Tyr) + AMP + diphosphate + H(+). Its function is as follows. Catalyzes the attachment of tyrosine to tRNA(Tyr) in a two-step reaction: tyrosine is first activated by ATP to form Tyr-AMP and then transferred to the acceptor end of tRNA(Tyr). The protein is Tyrosine--tRNA ligase of Syntrophotalea carbinolica (strain DSM 2380 / NBRC 103641 / GraBd1) (Pelobacter carbinolicus).